We begin with the raw amino-acid sequence, 1121 residues long: PR domain zinc finger protein 10 (1121 aa).

Disordered regions lie at residues 1–24 (MEAK…NTPQ) and 92–125 (TEAS…MDDW). Residues 106–124 (VDSEDEEEDNDSEDSEMDD) are compositionally biased toward acidic residues. The SET domain occupies 173 to 290 (LPLVLYIDRF…PKQELKVWYA (118 aa)). The tract at residues 192–295 (IPKRTQFGPL…KVWYAASYAE (104 aa)) is N-terminal PR domain; essential for transcriptional activation. The C2H2-type 1 zinc finger occupies 319–341 (WPCYECNRRFMSSEQLQQHLNMH). Disordered stretches follow at residues 350 to 387 (RPKS…SADK) and 419 to 473 (ESME…PHLT). Residues 351–374 (PKSRGRGRGRKRFGGARRPGRRTK) are compositionally biased toward basic residues. 9 consecutive C2H2-type zinc fingers follow at residues 500–522 (FKCP…MRFH), 529–551 (HVCH…LVLH), 557–579 (YSCL…VGIH), 585–608 (FLCP…RSFH), 613–635 (FQCS…MLRH), 641–664 (FLCS…QRMH), 696–719 (FKCR…SKRH), 741–764 (YYCQ…LKNH), and 803–826 (VCCP…RKKH). A C-terminal glutamine-rich region; essential for transcriptional activation region spans residues 871–1101 (QAMTELSQTL…PAGGQQATTQ (231 aa)). The interval 1077–1097 (VPSTATQGHPDPLEQPAGGQQ) is disordered.

It belongs to the class V-like SAM-binding methyltransferase superfamily.

The protein localises to the nucleus. In terms of biological role, transcriptional activator, essential for early embryonic development and survival of embryonic stem cells (ESCs). Supports cell growth and survival during early development by transcriptionally activating the expression of the translation initiation factor EIF3B, to sustain global translation. Activates the transcription of FLNC. The polypeptide is PR domain zinc finger protein 10 (prdm10) (Danio rerio (Zebrafish)).